The sequence spans 545 residues: T-complex protein 1 subunit gamma (545 aa).

Methionine 1 bears the N-acetylmethionine mark. The tract at residues 1 to 24 (MMGHRPVLVLSQNTKRESGRKVQS) is disordered. The residue at position 11 (serine 11) is a Phosphoserine. Lysine 15 participates in a covalent cross-link: Glycyl lysine isopeptide (Lys-Gly) (interchain with G-Cter in SUMO2). Glycine 42 serves as a coordination point for ADP. Glycine 42 provides a ligand contact to ATP. Position 93 (aspartate 93) interacts with Mg(2+). 6 residues coordinate ADP: glycine 94, threonine 95, threonine 96, serine 97, threonine 162, and lysine 163. ATP is bound by residues glycine 94, threonine 95, and threonine 96. At serine 170 the chain carries Phosphoserine. N6-acetyllysine is present on lysine 222. A phosphoserine mark is found at serine 243 and serine 244. At tyrosine 247 the chain carries Phosphotyrosine. Glycyl lysine isopeptide (Lys-Gly) (interchain with G-Cter in SUMO2) cross-links involve residues lysine 248 and lysine 249. Serine 252 bears the Phosphoserine mark. A disulfide bond links cysteine 366 and cysteine 372. Residue lysine 381 forms a Glycyl lysine isopeptide (Lys-Gly) (interchain with G-Cter in SUMO2) linkage. Residue glycine 411 participates in ADP binding. An ATP-binding site is contributed by glycine 411. A phosphothreonine mark is found at threonine 430 and threonine 459. Glycine 482, glutamate 483, glutamate 497, and lysine 502 together coordinate ADP. An ATP-binding site is contributed by glycine 482. Glutamate 497 is a binding site for ATP. The interval 526–545 (HKKKGDDQSRQGGAPDAGQE) is disordered.

The protein belongs to the TCP-1 chaperonin family. In terms of assembly, component of the chaperonin-containing T-complex (TRiC), a hexadecamer composed of two identical back-to-back stacked rings enclosing a protein folding chamber. Each ring is made up of eight different subunits: TCP1/CCT1, CCT2, CCT3, CCT4, CCT5, CCT6A/CCT6, CCT7, CCT8. Interacts with PACRG. Interacts with DNAAF4. Interacts with DLEC1.

It is found in the cytoplasm. The catalysed reaction is ATP + H2O = ADP + phosphate + H(+). Component of the chaperonin-containing T-complex (TRiC), a molecular chaperone complex that assists the folding of actin, tubulin and other proteins upon ATP hydrolysis. The TRiC complex mediates the folding of WRAP53/TCAB1, thereby regulating telomere maintenance. As part of the TRiC complex may play a role in the assembly of BBSome, a complex involved in ciliogenesis regulating transports vesicles to the cilia. The protein is T-complex protein 1 subunit gamma (CCT3) of Homo sapiens (Human).